The primary structure comprises 400 residues: Capsid protein (400 aa).

The span at 1 to 10 (MDPNLDQDTL) shows a compositional bias: polar residues. Residues 1 to 54 (MDPNLDQDTLPTHEEIDNDVDSAEEEPPEPPLLPDDIDDDDSHGSRTRRQVKPP) are disordered. Over residues 16–28 (IDNDVDSAEEEPP) the composition is skewed to acidic residues.

The protein belongs to the potexvirus capsid protein family.

Its subcellular location is the virion. Its function is as follows. Required for genome encapsidation. The protein is Capsid protein (ORF3) of Botryotinia fuckeliana (Noble rot fungus).